Consider the following 168-residue polypeptide: 3-isopropylmalate dehydratase small subunit 2 (168 aa).

Belongs to the LeuD family. LeuD type 2 subfamily. Heterodimer of LeuC and LeuD.

The catalysed reaction is (2R,3S)-3-isopropylmalate = (2S)-2-isopropylmalate. Its pathway is amino-acid biosynthesis; L-leucine biosynthesis; L-leucine from 3-methyl-2-oxobutanoate: step 2/4. In terms of biological role, catalyzes the isomerization between 2-isopropylmalate and 3-isopropylmalate, via the formation of 2-isopropylmaleate. The sequence is that of 3-isopropylmalate dehydratase small subunit 2 (leuD2) from Methanopyrus kandleri (strain AV19 / DSM 6324 / JCM 9639 / NBRC 100938).